Consider the following 677-residue polypeptide: Zinc finger and BTB domain-containing protein 5 (677 aa).

The BTB domain maps to cysteine 24–glutamate 93. A compositionally biased stretch (polar residues) spans leucine 158–glutamine 181. Disordered stretches follow at residues leucine 158–asparagine 252 and serine 287–cysteine 312. Serine 234 bears the Phosphoserine mark. Lysine 239 participates in a covalent cross-link: Glycyl lysine isopeptide (Lys-Gly) (interchain with G-Cter in SUMO2). Residues serine 287 to aspartate 300 show a composition bias toward polar residues. Residues lysine 322 and lysine 330 each participate in a glycyl lysine isopeptide (Lys-Gly) (interchain with G-Cter in SUMO2) cross-link. Residues serine 331–aspartate 387 are disordered. The span at alanine 350 to alanine 365 shows a compositional bias: low complexity. Positions glutamate 366 to phenylalanine 379 are enriched in basic and acidic residues. Serine 371 is modified (phosphoserine). Residues lysine 404 and lysine 415 each participate in a glycyl lysine isopeptide (Lys-Gly) (interchain with G-Cter in SUMO2) cross-link. Positions leucine 447–alanine 474 are disordered. The segment covering serine 449–serine 464 has biased composition (low complexity). Lysine 541 is covalently cross-linked (Glycyl lysine isopeptide (Lys-Gly) (interchain with G-Cter in SUMO2)). Polar residues predominate over residues glutamine 552–proline 576. A disordered region spans residues glutamine 552 to threonine 585. Glycyl lysine isopeptide (Lys-Gly) (interchain with G-Cter in SUMO2) cross-links involve residues lysine 594 and lysine 597. The segment at tyrosine 613–histidine 635 adopts a C2H2-type 1 zinc-finger fold. A C2H2-type 2; atypical zinc finger spans residues tyrosine 641–cysteine 664. Residues lysine 645 and lysine 658 each participate in a glycyl lysine isopeptide (Lys-Gly) (interchain with G-Cter in SUMO2) cross-link.

The protein resides in the nucleus. Its function is as follows. May be involved in transcriptional regulation. The sequence is that of Zinc finger and BTB domain-containing protein 5 (ZBTB5) from Homo sapiens (Human).